The chain runs to 310 residues: Transcription factor MYB53 (310 aa).

2 HTH myb-type domains span residues 9 to 61 and 62 to 116; these read ETGL…TNYL and RPDI…KKKL. DNA-binding regions (H-T-H motif) lie at residues 37-61 and 89-112; these read WSAL…TNYL and WSMI…NTHL.

In terms of assembly, interacts with FBX5. In terms of tissue distribution, highly expressed in roots and at lower levels in leaves, stems and flowers.

The protein localises to the nucleus. In terms of biological role, probable transcription factor. The polypeptide is Transcription factor MYB53 (Arabidopsis thaliana (Mouse-ear cress)).